Here is a 258-residue protein sequence, read N- to C-terminus: uncharacterized protein (258 aa).

Residues 163 to 187 (GIVGAAGLMLMFADLNGIPGICLMG) traverse the membrane as a helical segment.

The protein resides in the membrane. This is an uncharacterized protein from Methanocaldococcus jannaschii (strain ATCC 43067 / DSM 2661 / JAL-1 / JCM 10045 / NBRC 100440) (Methanococcus jannaschii).